We begin with the raw amino-acid sequence, 329 residues long: Beta-1,3-galactosyltransferase 6 (329 aa).

Topologically, residues 1–11 (MKLLRRAWRRR) are cytoplasmic. The helical; Signal-anchor for type II membrane protein transmembrane segment at 12–34 (AALGLGTLALCGAALLYLARCAA) threads the bilayer. Topologically, residues 35–329 (EPGDPRAMSG…QCCQRREGIP (295 aa)) are lumenal. An N-linked (GlcNAc...) asparagine glycan is attached at asparagine 131.

This sequence belongs to the glycosyltransferase 31 family. Mn(2+) is required as a cofactor. Ubiquitous.

It localises to the golgi apparatus. It is found in the golgi stack membrane. It carries out the reaction 3-O-(beta-D-galactosyl-(1-&gt;4)-beta-D-xylosyl)-L-seryl-[protein] + UDP-alpha-D-galactose = 3-O-(beta-D-galactosyl-(1-&gt;3)-beta-D-galactosyl-(1-&gt;4)-beta-D-xylosyl)-L-seryl-[protein] + UDP + H(+). It functions in the pathway glycan metabolism; chondroitin sulfate biosynthesis. It participates in glycan metabolism; heparan sulfate biosynthesis. Functionally, beta-1,3-galactosyltransferase that transfers galactose from UDP-galactose to substrates with a terminal beta-linked galactose residue. Has a preference for galactose-beta-1,4-xylose that is found in the linker region of glycosaminoglycans, such as heparan sulfate and chondroitin sulfate. Has no activity towards substrates with terminal glucosamine or galactosamine residues. In Homo sapiens (Human), this protein is Beta-1,3-galactosyltransferase 6 (B3GALT6).